The sequence spans 619 residues: Elongation factor 4 (619 aa).

The region spanning 17–198 (SVIRNFCIIA…RVVRAIPGPE (182 aa)) is the tr-type G domain. Residues 29 to 34 (DHGKST) and 145 to 148 (NKID) contribute to the GTP site.

This sequence belongs to the TRAFAC class translation factor GTPase superfamily. Classic translation factor GTPase family. LepA subfamily.

The protein resides in the cell membrane. The enzyme catalyses GTP + H2O = GDP + phosphate + H(+). Its function is as follows. Required for accurate and efficient protein synthesis under certain stress conditions. May act as a fidelity factor of the translation reaction, by catalyzing a one-codon backward translocation of tRNAs on improperly translocated ribosomes. Back-translocation proceeds from a post-translocation (POST) complex to a pre-translocation (PRE) complex, thus giving elongation factor G a second chance to translocate the tRNAs correctly. Binds to ribosomes in a GTP-dependent manner. This chain is Elongation factor 4, found in Micrococcus luteus (strain ATCC 4698 / DSM 20030 / JCM 1464 / CCM 169 / CCUG 5858 / IAM 1056 / NBRC 3333 / NCIMB 9278 / NCTC 2665 / VKM Ac-2230) (Micrococcus lysodeikticus).